The primary structure comprises 297 residues: MEEKQILCVGLVVLDVISLVDKYPKEDSEIRCLSQRWQRGGNASNSCTVLSLLGAPCAFMGSMAPGHVAFLVADFRRRGVDVSQVAWQSKGDTPSSCCIINNSNGNRTIVLHDTSLPDVSATDFEKVDLTQFKWIHIEGRNASEQVKMLQRIDTHNTRQPPEQKIRVSVEVEKPQEELFQLFGYGDVVFVSKDVAKHLGFQSAEAALRGLYGRVRKGAVLVCAWAEEGADALGPDDKLFHSDAFPPPRVVDTLGAGDTFNASVIFSLSQGRSMQEALRFGCQVAGKKCGLQGFDGIV.

Asp15, Gly41, Asn42, and Asn45 together coordinate beta-D-fructose. Residues Arg107, 225 to 228 (AEEG), and 254 to 257 (GAGD) contribute to the ATP site. Beta-D-fructose is bound at residue Asp257.

This sequence belongs to the carbohydrate kinase PfkB family. As to quaternary structure, homodimer.

The catalysed reaction is beta-D-fructose + ATP = beta-D-fructose 1-phosphate + ADP + H(+). It functions in the pathway carbohydrate metabolism; fructose metabolism. With respect to regulation, requires potassium. Inhibition by ADP. Its function is as follows. Catalyzes the phosphorylation of the ketose sugar fructose to fructose-1-phosphate. The chain is Ketohexokinase (KHK) from Pongo abelii (Sumatran orangutan).